Reading from the N-terminus, the 274-residue chain is Thymidylate synthase (274 aa).

Arginine 21 provides a ligand contact to dUMP. Histidine 51 is a binding site for (6R)-5,10-methylene-5,6,7,8-tetrahydrofolate. DUMP is bound at residue 123–124 (RR). The active-site Nucleophile is cysteine 156. DUMP is bound by residues 176–179 (RSAD), asparagine 187, and 217–219 (HIY). Residue aspartate 179 coordinates (6R)-5,10-methylene-5,6,7,8-tetrahydrofolate. Alanine 273 provides a ligand contact to (6R)-5,10-methylene-5,6,7,8-tetrahydrofolate.

It belongs to the thymidylate synthase family. Bacterial-type ThyA subfamily. Homodimer.

The protein resides in the cytoplasm. It carries out the reaction dUMP + (6R)-5,10-methylene-5,6,7,8-tetrahydrofolate = 7,8-dihydrofolate + dTMP. It participates in pyrimidine metabolism; dTTP biosynthesis. In terms of biological role, catalyzes the reductive methylation of 2'-deoxyuridine-5'-monophosphate (dUMP) to 2'-deoxythymidine-5'-monophosphate (dTMP) while utilizing 5,10-methylenetetrahydrofolate (mTHF) as the methyl donor and reductant in the reaction, yielding dihydrofolate (DHF) as a by-product. This enzymatic reaction provides an intracellular de novo source of dTMP, an essential precursor for DNA biosynthesis. The protein is Thymidylate synthase of Christiangramia forsetii (strain DSM 17595 / CGMCC 1.15422 / KT0803) (Gramella forsetii).